The primary structure comprises 572 residues: Urease subunit alpha (572 aa).

The Urease domain occupies 134–572 (AGIDSHIHLI…AAMNQRYFFG (439 aa)). Positions 139, 141, and 222 each coordinate Ni(2+). An N6-carboxylysine modification is found at K222. H224 contributes to the substrate binding site. Ni(2+)-binding residues include H251 and H277. Catalysis depends on H325, which acts as the Proton donor. Residue D365 participates in Ni(2+) binding.

The protein belongs to the metallo-dependent hydrolases superfamily. Urease alpha subunit family. As to quaternary structure, heterotrimer of UreA (gamma), UreB (beta) and UreC (alpha) subunits. Three heterotrimers associate to form the active enzyme. It depends on Ni cation as a cofactor. Post-translationally, carboxylation allows a single lysine to coordinate two nickel ions.

Its subcellular location is the cytoplasm. It catalyses the reaction urea + 2 H2O + H(+) = hydrogencarbonate + 2 NH4(+). It functions in the pathway nitrogen metabolism; urea degradation; CO(2) and NH(3) from urea (urease route): step 1/1. This chain is Urease subunit alpha, found in Yersinia enterocolitica serotype O:8 / biotype 1B (strain NCTC 13174 / 8081).